The primary structure comprises 349 residues: Small ribosomal subunit protein uS2 (349 aa).

This sequence belongs to the universal ribosomal protein uS2 family.

The polypeptide is Small ribosomal subunit protein uS2 (Methylocella silvestris (strain DSM 15510 / CIP 108128 / LMG 27833 / NCIMB 13906 / BL2)).